The chain runs to 461 residues: Photosystem II CP43 reaction center protein (461 aa).

Residues 1-2 (ME) constitute a propeptide that is removed on maturation. N-acetylthreonine is present on T3. The residue at position 3 (T3) is a Phosphothreonine. 5 consecutive transmembrane segments (helical) span residues 57–81 (LFEV…PHIA), 122–143 (LIGP…KDKN), 166–188 (KAMY…RVIT), 243–263 (TPWP…LSYS), and 279–300 (WFNN…ASQS). E355 serves as a coordination point for [CaMn4O5] cluster. The chain crosses the membrane as a helical span at residues 435 to 459 (RARAAAAGFEKGIDRFDEPVLSMRP).

This sequence belongs to the PsbB/PsbC family. PsbC subfamily. PSII is composed of 1 copy each of membrane proteins PsbA, PsbB, PsbC, PsbD, PsbE, PsbF, PsbH, PsbI, PsbJ, PsbK, PsbL, PsbM, PsbT, PsbX, PsbY, PsbZ, Psb30/Ycf12, at least 3 peripheral proteins of the oxygen-evolving complex and a large number of cofactors. It forms dimeric complexes. Requires Binds multiple chlorophylls and provides some of the ligands for the Ca-4Mn-5O cluster of the oxygen-evolving complex. It may also provide a ligand for a Cl- that is required for oxygen evolution. PSII binds additional chlorophylls, carotenoids and specific lipids. as cofactor. Post-translationally, phosphorylated in vitro.

The protein localises to the plastid. It localises to the chloroplast thylakoid membrane. Functionally, one of the components of the core complex of photosystem II (PSII). It binds chlorophyll and helps catalyze the primary light-induced photochemical processes of PSII. PSII is a light-driven water:plastoquinone oxidoreductase, using light energy to abstract electrons from H(2)O, generating O(2) and a proton gradient subsequently used for ATP formation. This Chlamydomonas reinhardtii (Chlamydomonas smithii) protein is Photosystem II CP43 reaction center protein.